Here is a 634-residue protein sequence, read N- to C-terminus: GTP-binding protein 4 (634 aa).

Ala-2 carries the post-translational modification N-acetylalanine. Lys-103 is subject to N6-acetyllysine; alternate. A Glycyl lysine isopeptide (Lys-Gly) (interchain with G-Cter in SUMO2); alternate cross-link involves residue Lys-103. The residue at position 122 (Ser-122) is a Phosphoserine. Residues 169–340 (RTLLLCGYPN…VKTEACDRLL (172 aa)) enclose the OBG-type G domain. Residues 175–182 (GYPNVGKS), 221–225 (DTPGI), and 289–292 (NKCD) each bind GTP. Lys-332 is covalently cross-linked (Glycyl lysine isopeptide (Lys-Gly) (interchain with G-Cter in SUMO2)). A phosphoserine mark is found at Ser-468, Ser-470, and Ser-472. Residues 495 to 517 (ILESKEKNTQGPRMPRTAKKVQR) form a disordered region. N6-acetyllysine is present on Lys-522. The segment at 529-634 (VDMDDKDDAH…KRKAGKKDRR (106 aa)) is disordered. Lys-534 participates in a covalent cross-link: Glycyl lysine isopeptide (Lys-Gly) (interchain with G-Cter in SUMO2). The segment covering 544-554 (RRSRSITRKRK) has biased composition (basic residues). Ser-558 bears the Phosphoserine mark. Positions 560–572 (PPSSVARSGSCSR) are enriched in polar residues. A compositionally biased stretch (basic and acidic residues) spans 573 to 585 (TPRDVSGLRDVKM). The segment covering 586–604 (VKKAKTMMKNAQKKMNRLG) has biased composition (basic residues). Over residues 605–618 (KKGEADRHVFDMKP) the composition is skewed to basic and acidic residues. The segment covering 619-634 (KHLLSGKRKAGKKDRR) has biased composition (basic residues).

It belongs to the TRAFAC class OBG-HflX-like GTPase superfamily. OBG GTPase family. NOG subfamily. Associates with pre-60S ribosomal particles. Interacts with MINAS-60 (product of an alternative open reading frame of RBM10).

Its subcellular location is the nucleus. The protein resides in the nucleolus. Functionally, involved in the biogenesis of the 60S ribosomal subunit. Acts as a TP53 repressor, preventing TP53 stabilization and cell cycle arrest. The sequence is that of GTP-binding protein 4 from Homo sapiens (Human).